We begin with the raw amino-acid sequence, 563 residues long: Arginine--tRNA ligase (563 aa).

The short motif at 121 to 131 (PNIAKPFSIGH) is the 'HIGH' region element.

The protein belongs to the class-I aminoacyl-tRNA synthetase family. As to quaternary structure, monomer.

It localises to the cytoplasm. The enzyme catalyses tRNA(Arg) + L-arginine + ATP = L-arginyl-tRNA(Arg) + AMP + diphosphate. The chain is Arginine--tRNA ligase from Streptococcus agalactiae serotype III (strain NEM316).